The chain runs to 446 residues: ATP-dependent RNA helicase SUB2 (446 aa).

Ser-2 bears the N-acetylserine mark. Phosphoserine is present on residues Ser-13 and Ser-37. Positions 23-41 (ASKAAEAGETGAATSATEG) are enriched in low complexity. The disordered stretch occupies residues 23–52 (ASKAAEAGETGAATSATEGDNNNNTAAGDK). The Q motif signature appears at 62-90 (TGFKDFLLKPELSRAIIDCGFEHPSEVQQ). A Helicase ATP-binding domain is found at 93 to 268 (IPQSIHGTDV…RRFLQNPLEI (176 aa)). 106–113 (AKSGLGKT) contributes to the ATP binding site. Phosphothreonine is present on Thr-169. Residues 215–218 (DECD) carry the DECD box motif. Residues 280–441 (GLQQYYIKLE…EFPEEGIDPS (162 aa)) form the Helicase C-terminal domain.

It belongs to the DEAD box helicase family. DECD subfamily. In terms of assembly, component of the TREX complex composed of at least SUB2, TEX1, YRA1 and the four THO complex components: HPR1, MFT1, THO2 and THP1. Interacts with HPR1, YRA1, and YRA2. SUB2 may mediate the interaction between the THO complex and YRA1. Associates with growing mRNP complexes during transcription. This association requires the presence of HPR1. Also interacts with SAC3. Interacts with THO1 in the presence of RNA; this interaction facilitates RNA binding of SUB2.

The protein localises to the nucleus. The enzyme catalyses ATP + H2O = ADP + phosphate + H(+). Functionally, ATP-binding RNA helicase component of the TREX complex involved in transcription elongation and required for the export of mRNA out of the nucleus. SUB2 also plays a role in pre-mRNA splicing and spliceosome assembly. May be involved in rDNA and telomeric silencing, and maintenance of genome integrity. Associates with THO1, which facilitates RNA binding of SUB2 and likely plays a role in mRNA export. This Saccharomyces cerevisiae (strain ATCC 204508 / S288c) (Baker's yeast) protein is ATP-dependent RNA helicase SUB2 (SUB2).